We begin with the raw amino-acid sequence, 873 residues long: Zinc fingers and homeoboxes protein 1 (873 aa).

The segment at 24–63 (LISDLDEGPPVLTPVENTRAESISSDEEVHESVDSDNQQN) is disordered. Phosphothreonine is present on Thr-36. 3 positions are modified to phosphoserine: Ser-45, Ser-47, and Ser-48. 2 consecutive C2H2-type zinc fingers follow at residues 70-93 (YECK…DSEH) and 102-125 (YVCV…LKYH). Lys-159 is covalently cross-linked (Glycyl lysine isopeptide (Lys-Gly) (interchain with G-Cter in SUMO2)). The residue at position 202 (Ser-202) is a Phosphoserine. The disordered stretch occupies residues 202-236 (SVEDVPEEKENEIKPDREEIVENPSSSASESNTST). The span at 212–221 (NEIKPDREEI) shows a compositional bias: basic and acidic residues. Low complexity predominate over residues 223–236 (ENPSSSASESNTST). The segment at 272–432 (NSNLIPKVLI…QNNIQKSQVP (161 aa)) is required for dimerization. A required for interaction with NFYA region spans residues 272-564 (NSNLIPKVLI…AQPKQSWNPF (293 aa)). Positions 284–346 (NSIPTYNAAL…LKHGVSWTPE (63 aa)) form a DNA-binding region, homeobox 1. Glycyl lysine isopeptide (Lys-Gly) (interchain with G-Cter in SUMO2) cross-links involve residues Lys-441, Lys-454, Lys-485, and Lys-629. 2 consecutive DNA-binding regions (homeobox) follow at residues 464-526 (SFGI…KSNQ) and 569-630 (PQKF…EEKM). 2 disordered regions span residues 626-667 (KEEK…ICKK) and 732-770 (SSMN…NNWD). Position 648 is a phosphoserine (Ser-648). Residues 660–722 (STGKICKKTP…YAWKNGNLKW (63 aa)) constitute a DNA-binding region (homeobox 4). Residues 734–768 (MNGLSSLRKRGRGRPKGRGRGRPRGRPRGSKRINN) are required for nuclear localization. The segment covering 740–764 (LRKRGRGRPKGRGRGRPRGRPRGSK) has biased composition (basic residues). Ser-774 carries the post-translational modification Phosphoserine. A DNA-binding region (homeobox 5) is located at residues 777–832 (KFKTGTAILKDYYLKHKFLNEQDLDELVNKSHMGYEQVREWFAERQRRSELGIELF). The interval 829–873 (IELFEENEEEDEVIDDQEEDEEETDDSDTWEPPRHVKRKLSKSDD) is disordered. Positions 831–857 (LFEENEEEDEVIDDQEEDEEETDDSDT) are enriched in acidic residues. The interval 831-873 (LFEENEEEDEVIDDQEEDEEETDDSDTWEPPRHVKRKLSKSDD) is required for repressor activity. Basic residues predominate over residues 863-873 (HVKRKLSKSDD).

This sequence belongs to the ZHX family. Forms homodimers. Heterodimer (via HD1 domain) with ZHX2 (via HD1 domain). Also forms a heterodimer with ZHX3 which is a prerequisite for repressor activity. Interacts with ATF7IP and NFYA. Interacts (via homeobox domains) with DNMT3B (via PWWP domain). In terms of tissue distribution, ubiquitously expressed. Expressed in podocytes.

The protein resides in the nucleus. Acts as a transcriptional repressor. Increases DNMT3B-mediated repressive transcriptional activity when DNMT3B is tethered to DNA. May link molecule between DNMT3B and other co-repressor proteins. In Homo sapiens (Human), this protein is Zinc fingers and homeoboxes protein 1 (ZHX1).